The primary structure comprises 491 residues: 2,3-bisphosphoglycerate-independent phosphoglycerate mutase (491 aa).

Mn(2+) contacts are provided by Asp-11 and Ser-61. Ser-61 acts as the Phosphoserine intermediate in catalysis. Substrate is bound by residues His-118, 147-148, Arg-177, Arg-183, 248-251, and Lys-320; these read RD and RSDR. Residues Asp-386, His-390, Asp-427, His-428, and His-445 each coordinate Mn(2+).

It belongs to the BPG-independent phosphoglycerate mutase family. As to quaternary structure, monomer. Requires Mn(2+) as cofactor.

It carries out the reaction (2R)-2-phosphoglycerate = (2R)-3-phosphoglycerate. It participates in carbohydrate degradation; glycolysis; pyruvate from D-glyceraldehyde 3-phosphate: step 3/5. In terms of biological role, catalyzes the interconversion of 2-phosphoglycerate and 3-phosphoglycerate. The chain is 2,3-bisphosphoglycerate-independent phosphoglycerate mutase from Aliarcobacter butzleri (strain RM4018) (Arcobacter butzleri).